An 84-amino-acid polypeptide reads, in one-letter code: Small ribosomal subunit protein eS27-like (84 aa).

Basic and acidic residues predominate over residues 1 to 16 (MPLARDLLHPSLEEEK). Residues 1-23 (MPLARDLLHPSLEEEKKKHKKKR) form a disordered region. The C4-type zinc finger occupies 38 to 60 (PGCYKITTVFSHAQTVVLCVGCS).

Belongs to the eukaryotic ribosomal protein eS27 family. The cofactor is Zn(2+).

The sequence is that of Small ribosomal subunit protein eS27-like from Mus musculus (Mouse).